A 760-amino-acid chain; its full sequence is Xaa-Pro dipeptidyl-peptidase (760 aa).

Catalysis depends on charge relay system residues Ser349, Asp469, and His499.

This sequence belongs to the peptidase S15 family. Homodimer.

It localises to the cytoplasm. It catalyses the reaction Hydrolyzes Xaa-Pro-|- bonds to release unblocked, N-terminal dipeptides from substrates including Ala-Pro-|-p-nitroanilide and (sequentially) Tyr-Pro-|-Phe-Pro-|-Gly-Pro-|-Ile.. Removes N-terminal dipeptides sequentially from polypeptides having unsubstituted N-termini provided that the penultimate residue is proline. In Streptococcus pyogenes serotype M12 (strain MGAS9429), this protein is Xaa-Pro dipeptidyl-peptidase.